Reading from the N-terminus, the 300-residue chain is Urease accessory protein UreD (300 aa).

Belongs to the UreD family. As to quaternary structure, ureD, UreF and UreG form a complex that acts as a GTP-hydrolysis-dependent molecular chaperone, activating the urease apoprotein by helping to assemble the nickel containing metallocenter of UreC. The UreE protein probably delivers the nickel.

The protein resides in the cytoplasm. In terms of biological role, required for maturation of urease via the functional incorporation of the urease nickel metallocenter. The polypeptide is Urease accessory protein UreD (Prochlorococcus marinus (strain AS9601)).